Reading from the N-terminus, the 20-residue chain is Alkaline phosphatase (20 aa).

A disordered region spans residues threonine 1 to threonine 20.

In terms of assembly, homodimer; may be disulfide-linked. Post-translationally, the N-terminus is blocked.

It catalyses the reaction a phosphate monoester + H2O = an alcohol + phosphate. Its activity is regulated as follows. Completely inhibited by thiol-reducing agents, such as DTT and 2-mercaptoethanol. Activity was also inhibited by sodium orthovanadate, sodium molybdate, N-ethylmaleimide, EDTA and zinc ion, but was not inhibited by okadaic acid. Its function is as follows. Acts against tyrosine-phosphatases. This Prevotella intermedia protein is Alkaline phosphatase.